Consider the following 725-residue polypeptide: ABC transporter G family member 7 (725 aa).

The chain crosses the membrane as a helical span at residues 12–34; that stretch reads VVSGIGGNGVGGALAAVAAALLV. Residues 70–316 enclose the ABC transporter domain; the sequence is IRWRNITCSL…YFGNFGFLCP (247 aa). 108-115 serves as a coordination point for ATP; sequence GPSGSGKT. The ABC transmembrane type-2 domain occupies 392–603; it reads RQFFLLLKRA…AFQGLCINEF (212 aa). Helical transmembrane passes span 446 to 466, 493 to 513, 528 to 548, and 553 to 573; these read LLQV…VGVF, IAEI…LYPM, GIVT…GAMV, and AAMA…GYYV. The segment at 676–725 is disordered; it reads NSGVQLDKAEVDQTEKPEDDDINQPLDDQNQTSDSDDELDEIRPFVLEGL. Residues 682–691 are compositionally biased toward basic and acidic residues; sequence DKAEVDQTEK.

The protein belongs to the ABC transporter superfamily. ABCG family. Eye pigment precursor importer (TC 3.A.1.204) subfamily.

It is found in the membrane. This Arabidopsis thaliana (Mouse-ear cress) protein is ABC transporter G family member 7 (ABCG7).